The primary structure comprises 70 residues: Phycocyanin-645 alpha-2 chain (70 aa).

Arg-16 is a binding site for (2R,3E)-phycocyanobilin. Mesobiliverdin contacts are provided by Cys-18, Tyr-26, and Lys-41.

This sequence belongs to the phycoerythrin family. Heterotetramer of 2 different alpha chains and 2 identical beta chains which form 2 alpha-beta heterodimers within the heterotetramer. In terms of processing, contains one phycocyanobilin chromophore, one mesobiliverdin chromophore and one 15,16-dihydrobiliverdin chromophore with binding mediated by both the alpha and beta subunits.

It is found in the plastid. It localises to the chloroplast thylakoid membrane. Light-harvesting photosynthetic tetrapyrrole chromophore-protein from the phycobiliprotein complex. The protein is Phycocyanin-645 alpha-2 chain of Chroomonas sp.